Reading from the N-terminus, the 316-residue chain is MQILLANPRGFCAGVDRAISIVENALAIYGAPIYVRHEVVHNRYVVDSLRERGAIFIEQISEVPDGAILIFSAHGVSQAVRNEAKSRDLTVFDATCPLVTKVHMEVARASRRGEESILIGHAGHPEVEGTMGQYSNPEGGMYLVESPDDVWKLTVKNEEKLSFMTQTTLSVDDTSDVIDALRKRFPKIVGPRKDDICYATTNRQEAVRALAEQAEVVLVVGSKNSSNSNRLAELAQRMGKRAFLIDDAKDIQEEWVKEVKCVGVTAGASAPDILVQNVVARLQQLGGGEAIPLEGREENIVFEVPKELRVDIREVD.

Cys-12 is a [4Fe-4S] cluster binding site. Residues His-41 and His-74 each contribute to the (2E)-4-hydroxy-3-methylbut-2-enyl diphosphate site. Dimethylallyl diphosphate is bound by residues His-41 and His-74. The isopentenyl diphosphate site is built by His-41 and His-74. Cys-96 serves as a coordination point for [4Fe-4S] cluster. His-124 lines the (2E)-4-hydroxy-3-methylbut-2-enyl diphosphate pocket. Residue His-124 coordinates dimethylallyl diphosphate. His-124 contributes to the isopentenyl diphosphate binding site. The active-site Proton donor is Glu-126. Thr-167 contacts (2E)-4-hydroxy-3-methylbut-2-enyl diphosphate. Cys-197 is a [4Fe-4S] cluster binding site. (2E)-4-hydroxy-3-methylbut-2-enyl diphosphate is bound by residues Ser-225, Ser-226, Asn-227, and Ser-269. Residues Ser-225, Ser-226, Asn-227, and Ser-269 each coordinate dimethylallyl diphosphate. Isopentenyl diphosphate is bound by residues Ser-225, Ser-226, Asn-227, and Ser-269.

The protein belongs to the IspH family. Homodimer. The cofactor is [4Fe-4S] cluster.

It carries out the reaction isopentenyl diphosphate + 2 oxidized [2Fe-2S]-[ferredoxin] + H2O = (2E)-4-hydroxy-3-methylbut-2-enyl diphosphate + 2 reduced [2Fe-2S]-[ferredoxin] + 2 H(+). It catalyses the reaction dimethylallyl diphosphate + 2 oxidized [2Fe-2S]-[ferredoxin] + H2O = (2E)-4-hydroxy-3-methylbut-2-enyl diphosphate + 2 reduced [2Fe-2S]-[ferredoxin] + 2 H(+). It functions in the pathway isoprenoid biosynthesis; dimethylallyl diphosphate biosynthesis; dimethylallyl diphosphate from (2E)-4-hydroxy-3-methylbutenyl diphosphate: step 1/1. Its pathway is isoprenoid biosynthesis; isopentenyl diphosphate biosynthesis via DXP pathway; isopentenyl diphosphate from 1-deoxy-D-xylulose 5-phosphate: step 6/6. In terms of biological role, catalyzes the conversion of 1-hydroxy-2-methyl-2-(E)-butenyl 4-diphosphate (HMBPP) into a mixture of isopentenyl diphosphate (IPP) and dimethylallyl diphosphate (DMAPP). Acts in the terminal step of the DOXP/MEP pathway for isoprenoid precursor biosynthesis. This chain is 4-hydroxy-3-methylbut-2-enyl diphosphate reductase, found in Escherichia coli O6:H1 (strain CFT073 / ATCC 700928 / UPEC).